We begin with the raw amino-acid sequence, 265 residues long: MHNKQQVKIGIIGGSGLSESEAKKEIITIKTPYGEPSCPYEIEKIDDIEVLFLRRHGQKHSIPPHKVNYRANIYGFKNFGIERIFGVFATGSLTENIPPGSIVIPNQIIDFTQGMRANTFYEEKKVVHIDFTEPFCSEIRHYLLETARKIGINVISHATYICVNGPRLETAAEIKFFKNIGADIIGMTIMPEASLAREVEICYAAVAVVANYAAGISKFPLTVKEVIETMEDSLDAVGFLIKETIKKLPEERKCLCKHALKNASF.

Residues S15 and 55 to 56 (RH) contribute to the phosphate site. Substrate is bound at residue M187. Residue T188 coordinates phosphate. 211-213 (NYA) is a substrate binding site.

The protein belongs to the PNP/MTAP phosphorylase family. MTAP subfamily. Homotrimer.

The enzyme catalyses S-methyl-5'-thioinosine + phosphate = 5-(methylsulfanyl)-alpha-D-ribose 1-phosphate + hypoxanthine. It functions in the pathway purine metabolism; purine nucleoside salvage. Its function is as follows. Catalyzes the reversible phosphorylation of S-methyl-5'-thioinosine (MTI) to hypoxanthine and 5-methylthioribose-1-phosphate. Involved in the breakdown of S-methyl-5'-thioadenosine (MTA), a major by-product of polyamine biosynthesis. Catabolism of (MTA) occurs via deamination to MTI and phosphorolysis to hypoxanthine. The protein is Probable S-methyl-5'-thioinosine phosphorylase of Thermodesulfovibrio yellowstonii (strain ATCC 51303 / DSM 11347 / YP87).